The primary structure comprises 37 residues: Cytochrome b6-f complex subunit 5 (37 aa).

Residues 5–25 form a helical membrane-spanning segment; that stretch reads FLFGIVLGLIPITLAGLFVTA.

It belongs to the PetG family. In terms of assembly, the 4 large subunits of the cytochrome b6-f complex are cytochrome b6, subunit IV (17 kDa polypeptide, PetD), cytochrome f and the Rieske protein, while the 4 small subunits are PetG, PetL, PetM and PetN. The complex functions as a dimer.

The protein localises to the plastid. It is found in the chloroplast thylakoid membrane. In terms of biological role, component of the cytochrome b6-f complex, which mediates electron transfer between photosystem II (PSII) and photosystem I (PSI), cyclic electron flow around PSI, and state transitions. PetG is required for either the stability or assembly of the cytochrome b6-f complex. The polypeptide is Cytochrome b6-f complex subunit 5 (Platanus occidentalis (Sycamore)).